We begin with the raw amino-acid sequence, 673 residues long: DNA ligase (673 aa).

NAD(+) is bound by residues 38–42, 87–88, and Glu119; these read DSVYD and SL. Lys121 functions as the N6-AMP-lysine intermediate in the catalytic mechanism. NAD(+) is bound by residues Arg142, Glu179, Lys296, and Lys320. Zn(2+)-binding residues include Cys414, Cys417, Cys432, and Cys438. In terms of domain architecture, BRCT spans 595-673; sequence VVKSEIAGKT…EEAFLKLLKS (79 aa).

The protein belongs to the NAD-dependent DNA ligase family. LigA subfamily. It depends on Mg(2+) as a cofactor. Requires Mn(2+) as cofactor.

It carries out the reaction NAD(+) + (deoxyribonucleotide)n-3'-hydroxyl + 5'-phospho-(deoxyribonucleotide)m = (deoxyribonucleotide)n+m + AMP + beta-nicotinamide D-nucleotide.. Its function is as follows. DNA ligase that catalyzes the formation of phosphodiester linkages between 5'-phosphoryl and 3'-hydroxyl groups in double-stranded DNA using NAD as a coenzyme and as the energy source for the reaction. It is essential for DNA replication and repair of damaged DNA. This Coxiella burnetii (strain CbuK_Q154) (Coxiella burnetii (strain Q154)) protein is DNA ligase.